Reading from the N-terminus, the 461-residue chain is tRNA-2-methylthio-N(6)-dimethylallyladenosine synthase (461 aa).

The MTTase N-terminal domain maps to 18–134 (KHIYIQTLGC…LPDFISRIEK (117 aa)). [4Fe-4S] cluster-binding residues include cysteine 27, cysteine 63, cysteine 97, cysteine 172, cysteine 176, and cysteine 179. In terms of domain architecture, Radical SAM core spans 158 to 388 (CNGQVSSFVT…QALQEQHTLE (231 aa)). A TRAM domain is found at 391 to 454 (KAMEGKQEDV…LHSLRGEMLC (64 aa)).

It belongs to the methylthiotransferase family. MiaB subfamily. As to quaternary structure, monomer. The cofactor is [4Fe-4S] cluster.

The protein resides in the cytoplasm. The enzyme catalyses N(6)-dimethylallyladenosine(37) in tRNA + (sulfur carrier)-SH + AH2 + 2 S-adenosyl-L-methionine = 2-methylsulfanyl-N(6)-dimethylallyladenosine(37) in tRNA + (sulfur carrier)-H + 5'-deoxyadenosine + L-methionine + A + S-adenosyl-L-homocysteine + 2 H(+). Its function is as follows. Catalyzes the methylthiolation of N6-(dimethylallyl)adenosine (i(6)A), leading to the formation of 2-methylthio-N6-(dimethylallyl)adenosine (ms(2)i(6)A) at position 37 in tRNAs that read codons beginning with uridine. The protein is tRNA-2-methylthio-N(6)-dimethylallyladenosine synthase of Syntrophus aciditrophicus (strain SB).